An 86-amino-acid polypeptide reads, in one-letter code: Large ribosomal subunit protein uL23 (86 aa).

The protein belongs to the universal ribosomal protein uL23 family. In terms of assembly, part of the 50S ribosomal subunit. Contacts protein L29.

Functionally, binds to 23S rRNA. One of the proteins that surrounds the polypeptide exit tunnel on the outside of the ribosome. In Methanocaldococcus jannaschii (strain ATCC 43067 / DSM 2661 / JAL-1 / JCM 10045 / NBRC 100440) (Methanococcus jannaschii), this protein is Large ribosomal subunit protein uL23.